Here is a 239-residue protein sequence, read N- to C-terminus: Lactate utilization protein A (239 aa).

This sequence belongs to the LutA/YkgE family.

Functionally, is involved in L-lactate degradation and allows cells to grow with lactate as the sole carbon source. The polypeptide is Lactate utilization protein A (Shouchella clausii (strain KSM-K16) (Alkalihalobacillus clausii)).